The sequence spans 328 residues: P2Y purinoceptor 3 (328 aa).

Residues 1-22 (MSMANFTGGRNSCTFHEEFKQV) are Extracellular-facing. N5 carries an N-linked (GlcNAc...) asparagine glycan. A helical transmembrane segment spans residues 23-43 (LLPLVYSVVFLLGLPLNAVVI). Residues 44–57 (GQIWLARKALTRTT) lie on the Cytoplasmic side of the membrane. The chain crosses the membrane as a helical span at residues 58-78 (IYMLNLAMADLLYVCSLPLLI). The Extracellular segment spans residues 79–96 (YNYTQKDYWPFGDFTCKF). Cysteines 94 and 172 form a disulfide. Residues 97–117 (VRFQFYTNLHGSILFLTCISV) traverse the membrane as a helical segment. Over 118-139 (QRYMGICHPLASWHKKKGKKLT) the chain is Cytoplasmic. A helical membrane pass occupies residues 140-160 (WLVCAAVWFIVIAQCLPTFVF). The Extracellular portion of the chain corresponds to 161-189 (ASTGTQRNRTVCYDLSPPDRSTSYFPYGI). Residues 190–210 (TLTITGFLLPFAAILACYCSM) traverse the membrane as a helical segment. Topologically, residues 211 to 231 (ARILCQKDELIGLAVHKKKDK) are cytoplasmic. Residues 232–252 (AVRMIIIVVIVFSISFFPFHL) form a helical membrane-spanning segment. The Extracellular segment spans residues 253–275 (TKTIYLIVRSSASLPCPTLQAFA). A helical transmembrane segment spans residues 276 to 298 (IAYKCTRPFASMNSVLDPILFYF). The Cytoplasmic portion of the chain corresponds to 299 to 323 (TQRKFRESTRYLLDKMSSKWRQDHC).

Belongs to the G-protein coupled receptor 1 family.

It is found in the cell membrane. Its function is as follows. Receptor for extracellular ADP &gt; UTP &gt; ATP = UDP. The activity of this receptor is mediated by G proteins which activate a phosphatidylinositol-calcium second messenger system. The polypeptide is P2Y purinoceptor 3 (P2RY3) (Gallus gallus (Chicken)).